Consider the following 126-residue polypeptide: Holo-[acyl-carrier-protein] synthase (126 aa).

The Mg(2+) site is built by D8 and E59.

It belongs to the P-Pant transferase superfamily. AcpS family. Mg(2+) is required as a cofactor.

The protein localises to the cytoplasm. The catalysed reaction is apo-[ACP] + CoA = holo-[ACP] + adenosine 3',5'-bisphosphate + H(+). In terms of biological role, transfers the 4'-phosphopantetheine moiety from coenzyme A to a Ser of acyl-carrier-protein. The chain is Holo-[acyl-carrier-protein] synthase from Rickettsia akari (strain Hartford).